The sequence spans 260 residues: Kallikrein-8 (260 aa).

The first 28 residues, 1–28, serve as a signal peptide directing secretion; that stretch reads MGRPPPCAIQTWILLFLLMGAWAGLTRA. Positions 29–32 are excised as a propeptide; it reads QGSK. Positions 33–257 constitute a Peptidase S1 domain; the sequence is ILEGQECKPH…YTNWIKKTMG (225 aa). 6 cysteine pairs are disulfide-bonded: C39/C173, C58/C74, C145/C246, C152/C218, C184/C198, and C208/C233. The Charge relay system role is filled by H73. N110 carries N-linked (GlcNAc...) asparagine glycosylation. Residue D120 is the Charge relay system of the active site. S212 (charge relay system) is an active-site residue.

This sequence belongs to the peptidase S1 family. Kallikrein subfamily. Interacts with SPINK9. In terms of tissue distribution, restricted to hippocampus.

Its subcellular location is the secreted. It is found in the cytoplasm. It carries out the reaction Cleavage of amide substrates following the basic amino acids Arg or Lys at the P1 position, with a preference for Arg over Lys.. Functionally, serine protease which is capable of degrading a number of proteins such as casein, fibrinogen, kininogen, fibronectin and collagen type IV. Also cleaves L1CAM in response to increased neural activity. Induces neurite outgrowth and fasciculation of cultured hippocampal neurons. Plays a role in the formation and maturation of orphan and small synaptic boutons in the Schaffer-collateral pathway, regulates Schaffer-collateral long-term potentiation in the hippocampus and is required for memory acquisition and synaptic plasticity. Involved in skin desquamation and keratinocyte proliferation. Plays a role in the secondary phase of pathogenesis following spinal cord injury. This Rattus norvegicus (Rat) protein is Kallikrein-8 (Klk8).